The primary structure comprises 283 residues: MAEITASLVKELRERTGAGMMECKKALVEANGDIELAIDNMRKSGQAKAAKKAGRVAAEGVIVARIANGFGVLVEMNCETDFVAKDAGFLGLANEVADFAAANKGTEIEALAAQFEEKRAALVAKIGENMTIRRVQYLDDARASYLHGAKIGVLVAGQGGDEELFKKVAMHVAASRPEYVNPTDVPADVVEHERNIQVDIAMQSGKPREIAEKMVEGRMRKFTGEVSLTGQPFVMDPSQSVGDFLKAAGATVSGFIRFEVGEGIEKVEEDFAAEVAKITGGNA.

The tract at residues 80–83 (TDFV) is involved in Mg(2+) ion dislocation from EF-Tu.

The protein belongs to the EF-Ts family.

The protein resides in the cytoplasm. Its function is as follows. Associates with the EF-Tu.GDP complex and induces the exchange of GDP to GTP. It remains bound to the aminoacyl-tRNA.EF-Tu.GTP complex up to the GTP hydrolysis stage on the ribosome. The protein is Elongation factor Ts of Actinobacillus succinogenes (strain ATCC 55618 / DSM 22257 / CCUG 43843 / 130Z).